Reading from the N-terminus, the 173-residue chain is MPAPQKDGPRANRDIRGVRDVQLIDQDGQNRGVVPFFDALAMAEEVGLDLVEIAPNSVPPVCKFLDYGRFRFNEQKKQNEARKRQKTVEVKEIKLRPGIDKHDYEVKMKAVQRFFEEGDKVKVTLRFRGREIAHQDIGLRLLERVKQETQEIAKVESEPMLEGRQMIMILAPR.

The protein belongs to the IF-3 family. In terms of assembly, monomer.

The protein localises to the cytoplasm. IF-3 binds to the 30S ribosomal subunit and shifts the equilibrium between 70S ribosomes and their 50S and 30S subunits in favor of the free subunits, thus enhancing the availability of 30S subunits on which protein synthesis initiation begins. This Methylorubrum extorquens (strain CM4 / NCIMB 13688) (Methylobacterium extorquens) protein is Translation initiation factor IF-3.